The following is a 111-amino-acid chain: WAP four-disulfide core domain protein 12 (111 aa).

The first 23 residues, 1 to 23, serve as a signal peptide directing secretion; it reads MGSSSFLVLMVSLALVTLVAAEG. The region spanning 27-74 is the WAP domain; the sequence is NIEKPGVCPADNIRCIKSDPPQCHTDQDCQGIRKCCYLHCGFKCVIPV. Intrachain disulfides connect C34–C62, C41–C66, C49–C61, and C55–C70. The segment at 80 to 111 is disordered; that stretch reads GGNKDEDVSRPCPEPGWEAKPPGVFSTRCPQK.

It is found in the secreted. Functionally, antibacterial protein. Putative acid-stable proteinase inhibitor. This chain is WAP four-disulfide core domain protein 12 (WFDC12), found in Callithrix jacchus (White-tufted-ear marmoset).